The sequence spans 392 residues: Lipase (392 aa).

An N-terminal signal peptide occupies residues 1–26 (MVSFISISQGVSLCLLVSSMMLGSSA). Positions 27 to 95 (VPVSGKSGSS…GGNLTSIGKR (69 aa)) are excised as a propeptide. The tract at residues 50-69 (PLISSRCAPPSNKGSKSDLQ) is disordered. 3 disulfide bridges follow: C152/C391, C163/C166, and C358/C367. S268 (nucleophile) is an active-site residue. The active-site Charge relay system is the D327. D379 lines the Ca(2+) pocket. Residue H380 is the Charge relay system of the active site.

Belongs to the AB hydrolase superfamily. Lipase family.

The protein localises to the secreted. It localises to the extracellular space. It carries out the reaction a triacylglycerol + H2O = a diacylglycerol + a fatty acid + H(+). Lipase activity is maximal at a lipid-water interface (interfacial activation), probably by an induced conformational change that results in an increased accessibility of the active site to the substrate. Hydrolyzes ester bonds of triglycerides as well as of their derived partial glycerides with a strong 1,3-positional specificity. This Rhizopus niveus protein is Lipase.